The following is a 445-amino-acid chain: Argininosuccinate synthase (445 aa).

ATP-binding positions include 17 to 25 (AFSGGLDTS) and A43. Y99 contributes to the L-citrulline binding site. Residues G129 and T131 each contribute to the ATP site. 3 residues coordinate L-aspartate: T131, N135, and D136. Residue N135 coordinates L-citrulline. Position 136 (D136) interacts with ATP. Positions 139 and 192 each coordinate L-citrulline. ATP is bound at residue D194. Positions 201, 203, and 280 each coordinate L-citrulline.

The protein belongs to the argininosuccinate synthase family. Type 2 subfamily. As to quaternary structure, homotetramer.

It is found in the cytoplasm. The enzyme catalyses L-citrulline + L-aspartate + ATP = 2-(N(omega)-L-arginino)succinate + AMP + diphosphate + H(+). Its pathway is amino-acid biosynthesis; L-arginine biosynthesis; L-arginine from L-ornithine and carbamoyl phosphate: step 2/3. This Gemmatimonas aurantiaca (strain DSM 14586 / JCM 11422 / NBRC 100505 / T-27) protein is Argininosuccinate synthase.